The following is a 664-amino-acid chain: Cyclic nucleotide-gated channel alpha-2 (664 aa).

Residues 1–11 (MTEKTNGVKSS) are compositionally biased toward polar residues. The interval 1–49 (MTEKTNGVKSSPANNHNHHAPPAIKANGKDDHRTSSRPHSAADDDTSSE) is disordered. Residues 1–144 (MTEKTNGVKS…PAGDWYYCWL (144 aa)) lie on the Cytoplasmic side of the membrane. The span at 12-23 (PANNHNHHAPPA) shows a compositional bias: low complexity. The chain crosses the membrane as a helical span at residues 145–166 (FVIAMPVLYNWCLLVARACFSD). Residues 167–176 (LQKGYYLVWL) are Extracellular-facing. Residues 177 to 197 (VLDYVSDVVYIADLFIRLRTG) traverse the membrane as a helical segment. At 198 to 222 (FLEQGLLVKDTKKLRDNYIHTLQFK) the chain is on the cytoplasmic side. A helical membrane pass occupies residues 223 to 241 (LDVASIIPTDLIYFAVDIH). The Extracellular portion of the chain corresponds to 242–246 (SPEVR). Residues 247-265 (FNRLLHFARMFEFFDRTET) traverse the membrane as a helical segment. Residues 266 to 272 (RTNYPNI) are Cytoplasmic-facing. An ion conduction pathway region spans residues 270-378 (PNIFRISNLV…GNVGSMISNM (109 aa)). The chain crosses the membrane as a helical span at residues 273–296 (FRISNLVLYILVIIHWNACIYYAI). The Extracellular segment spans residues 297–319 (SKSIGFGVDTWVYPNITDPEYGY). The next 2 membrane-spanning stretches (helical) occupy residues 320–354 (LARE…LFVI) and 355–379 (FDFL…SNMN). Residues 337 to 340 (TIGE) are selectivity filter. Residues 380–456 (ATRAEFQAKI…STLKKVRIFH (77 aa)) form a C-linker region. The Cytoplasmic segment spans residues 380–664 (ATRAEFQAKI…SPELAAADEP (285 aa)). Residues 460–580 (AGLLVELVLK…EERGREILMK (121 aa)) form a cyclic nucleotide-binding domain region. 3',5'-cyclic GMP-binding residues include glycine 520, serine 523, arginine 536, and threonine 537. Positions 536 and 537 each coordinate 3',5'-cyclic AMP. A coiled-coil region spans residues 597 to 651 (VQEKLGQLETNMETLYTRFGRLLAEYTGAQQKLKQRITVLETKMKQNNEDDYLSD). The segment at 641–664 (KQNNEDDYLSDGMNSPELAAADEP) is disordered.

It belongs to the cyclic nucleotide-gated cation channel (TC 1.A.1.5) family. CNGA2 subfamily. In terms of assembly, the olfactory cyclic nucleotide-gated channel is an heterotetramer composed of CNGA2, CNGA4 and CNGB1b subunits with 2:1:1 stoichiometry.

It is found in the cell projection. The protein localises to the cilium membrane. The enzyme catalyses Ca(2+)(in) = Ca(2+)(out). It catalyses the reaction Na(+)(in) = Na(+)(out). The catalysed reaction is K(+)(in) = K(+)(out). It carries out the reaction NH4(+)(in) = NH4(+)(out). The enzyme catalyses Rb(+)(in) = Rb(+)(out). It catalyses the reaction Li(+)(in) = Li(+)(out). The catalysed reaction is Cs(+)(in) = Cs(+)(out). Its function is as follows. Pore-forming subunit of the olfactory cyclic nucleotide-gated channel. Operates in the cilia of olfactory sensory neurons where chemical stimulation of the odorant is converted to an electrical signal. Mediates odorant-induced cAMP-dependent Ca(2+) influx triggering neuron depolarization. The rise of intracellular Ca(2+) levels potentiates the olfactory response by activating Ca(2+)-dependent Cl(-) channels, but it also serves as a negative feedback signal to desensitize the channel for rapid adaptation to odorants. Conducts cAMP- and cGMP-gated ion currents, with permeability for monovalent and divalent cations. In Homo sapiens (Human), this protein is Cyclic nucleotide-gated channel alpha-2.